Reading from the N-terminus, the 184-residue chain is GTP cyclohydrolase 1 (184 aa).

Zn(2+) is bound by residues Cys-75, His-78, and Cys-146.

It belongs to the GTP cyclohydrolase I family. Toroid-shaped homodecamer, composed of two pentamers of five dimers.

The enzyme catalyses GTP + H2O = 7,8-dihydroneopterin 3'-triphosphate + formate + H(+). It functions in the pathway cofactor biosynthesis; 7,8-dihydroneopterin triphosphate biosynthesis; 7,8-dihydroneopterin triphosphate from GTP: step 1/1. This chain is GTP cyclohydrolase 1, found in Pseudoalteromonas atlantica (strain T6c / ATCC BAA-1087).